Here is a 271-residue protein sequence, read N- to C-terminus: NADPH-dependent 7-cyano-7-deazaguanine reductase (271 aa).

81–83 (IES) contacts substrate. 83–84 (SK) contacts NADPH. C177 acts as the Thioimide intermediate in catalysis. The active-site Proton donor is D184. 216–217 (HE) is a binding site for substrate. 245–246 (RG) provides a ligand contact to NADPH.

It belongs to the GTP cyclohydrolase I family. QueF type 2 subfamily. As to quaternary structure, homodimer.

It is found in the cytoplasm. It catalyses the reaction 7-aminomethyl-7-carbaguanine + 2 NADP(+) = 7-cyano-7-deazaguanine + 2 NADPH + 3 H(+). It participates in tRNA modification; tRNA-queuosine biosynthesis. Functionally, catalyzes the NADPH-dependent reduction of 7-cyano-7-deazaguanine (preQ0) to 7-aminomethyl-7-deazaguanine (preQ1). The polypeptide is NADPH-dependent 7-cyano-7-deazaguanine reductase (Xanthomonas campestris pv. campestris (strain 8004)).